A 214-amino-acid chain; its full sequence is Thymidylate kinase (214 aa).

Residue 10 to 17 participates in ATP binding; sequence GGEGVGKT.

This sequence belongs to the thymidylate kinase family.

The enzyme catalyses dTMP + ATP = dTDP + ADP. Its function is as follows. Phosphorylation of dTMP to form dTDP in both de novo and salvage pathways of dTTP synthesis. This Bartonella quintana (strain Toulouse) (Rochalimaea quintana) protein is Thymidylate kinase.